Reading from the N-terminus, the 380-residue chain is Cytochrome b (380 aa).

The next 4 membrane-spanning stretches (helical) occupy residues 34–54 (FGSL…LLAM), 78–99 (WLIR…FLHI), 114–134 (WNTG…GYVL), and 179–199 (FFAL…IHLT). Residues histidine 84 and histidine 98 each coordinate heme b. Positions 183 and 197 each coordinate heme b. Histidine 202 serves as a coordination point for a ubiquinone. The next 4 helical transmembrane spans lie at 227–247 (IKDI…ALFS), 289–309 (LGGV…PFLH), 321–341 (LSQT…WIGS), and 348–368 (FIII…ILFP).

Belongs to the cytochrome b family. In terms of assembly, the cytochrome bc1 complex contains 11 subunits: 3 respiratory subunits (MT-CYB, CYC1 and UQCRFS1), 2 core proteins (UQCRC1 and UQCRC2) and 6 low-molecular weight proteins (UQCRH/QCR6, UQCRB/QCR7, UQCRQ/QCR8, UQCR10/QCR9, UQCR11/QCR10 and a cleavage product of UQCRFS1). This cytochrome bc1 complex then forms a dimer. It depends on heme b as a cofactor.

Its subcellular location is the mitochondrion inner membrane. Functionally, component of the ubiquinol-cytochrome c reductase complex (complex III or cytochrome b-c1 complex) that is part of the mitochondrial respiratory chain. The b-c1 complex mediates electron transfer from ubiquinol to cytochrome c. Contributes to the generation of a proton gradient across the mitochondrial membrane that is then used for ATP synthesis. The sequence is that of Cytochrome b (MT-CYB) from Alectoris rufa (Red-legged partridge).